The sequence spans 98 residues: NADH-ubiquinone oxidoreductase chain 4L (98 aa).

3 helical membrane passes run 1–21 (MTLI…GFLM), 29–49 (ALLC…LTVL), and 59–79 (MPII…ALLV).

This sequence belongs to the complex I subunit 4L family. As to quaternary structure, core subunit of respiratory chain NADH dehydrogenase (Complex I) which is composed of 45 different subunits.

It is found in the mitochondrion inner membrane. The catalysed reaction is a ubiquinone + NADH + 5 H(+)(in) = a ubiquinol + NAD(+) + 4 H(+)(out). Functionally, core subunit of the mitochondrial membrane respiratory chain NADH dehydrogenase (Complex I) which catalyzes electron transfer from NADH through the respiratory chain, using ubiquinone as an electron acceptor. Part of the enzyme membrane arm which is embedded in the lipid bilayer and involved in proton translocation. The sequence is that of NADH-ubiquinone oxidoreductase chain 4L (MT-ND4L) from Inia geoffrensis (Amazon river dolphin).